Here is a 404-residue protein sequence, read N- to C-terminus: Protein translocase subunit SecD (404 aa).

Transmembrane regions (helical) follow at residues 7-27 (HYIWLFLVIFVPALILYFNKV), 239-259 (LIALGVISVFMIAIYKIPGIV), 262-282 (IALLINGVLVLGLLSGIGAAL), 283-303 (TLPGIAGFILTLGMAVDSNVI), 330-350 (FPAIIDGNITTLLVAAVLFFL), and 357-377 (GFAVTLSLGVVATIITGVFVS).

The protein belongs to the SecD/SecF family. SecD subfamily. In terms of assembly, forms a complex with SecF. Part of the essential Sec protein translocation apparatus which comprises SecA, SecYEG and auxiliary proteins SecDF. Other proteins may also be involved.

It is found in the cell inner membrane. Its function is as follows. Part of the Sec protein translocase complex. Interacts with the SecYEG preprotein conducting channel. SecDF uses the proton motive force (PMF) to complete protein translocation after the ATP-dependent function of SecA. This chain is Protein translocase subunit SecD, found in Leptotrichia buccalis (strain ATCC 14201 / DSM 1135 / JCM 12969 / NCTC 10249 / C-1013-b).